The sequence spans 380 residues: O-methyltransferase ucdC (380 aa).

S-adenosyl-L-methionine is bound by residues 222–223 (GG), Asp247, and Arg283. His287 acts as the Proton acceptor in catalysis.

The protein belongs to the class I-like SAM-binding methyltransferase superfamily. Cation-independent O-methyltransferase family. COMT subfamily.

It participates in secondary metabolite biosynthesis. Functionally, nonribosomal peptide synthetase that mediates the biosynthesis of usterphenyllins and uscandidusins, p-terphenyl derivatives. Within the pathway, ucdC catalyzes O-methylation of the terphenyl triol intermediate produced by ucdB to yield terphenyllin carrying two methoxy moieties at C-9 and C-12. The pathway begin with the biosynthesis of 4-hydroxyphenylpyruvate (HPPA) from L-tyrosine, possibly by the aminotransferase ucdG. The nonribosomal peptide synthetase ucdA then condenses two HPPA units to produce atromentin. The key step in this pathway is the reduction and dehydration of atromentin to form a terphenyl triol intermediate, performed by the NAD-dependent dehydrogenase ucdB. Further O-methylation by the methyltransferase ucdC forms terphenyllin carrying two methoxy moieties at C-9 and C-12, and subsequent dihydroxylation at C-3 of ring A and C-15 of ring C by the flavin-dependent oxygenase ucdD leads to 3,15-dihydroxyterphenyllin. Prenylation by ucdE at position C-5 of ring A forms usterphenyllin B, and is followed by a second prenylation at position C-14 of ring C to form usterphenyllin A. The following furan ring formation that leads to uscandidusins A and B was proven to be an unexpected spontaneous non-enzymatic reaction. The sequence is that of O-methyltransferase ucdC from Aspergillus ustus.